A 148-amino-acid polypeptide reads, in one-letter code: uncharacterized protein (148 aa).

The chain crosses the membrane as a helical span at residues 1–21 (MLQNYAIVLGMAVAVAIWYFF). A disordered region spans residues 27-61 (APPGPNPPKPDPPKPDPPKMHMPKKKPHWMDPHLT).

The protein resides in the host membrane. This is an uncharacterized protein from Frog virus 3 (isolate Goorha) (FV-3).